Consider the following 144-residue polypeptide: uncharacterized protein (144 aa).

Positions 23-82 form a coiled coil; the sequence is EELYKKLENNLRKIETSYLDSKHCQDFKRKIEYYKIVPLISETKEIIKVLIQKIETLEIK.

This is an uncharacterized protein from Acanthamoeba polyphaga mimivirus (APMV).